We begin with the raw amino-acid sequence, 216 residues long: Ras-related protein RABA1a (216 aa).

20–27 provides a ligand contact to GTP; sequence GDSGVGKS. Positions 42-50 match the Effector region motif; it reads SKSTIGVEF. GTP is bound by residues 68–72, 126–129, and 156–157; these read DTAGQ, NKCD, and SA. 2 S-geranylgeranyl cysteine lipidation sites follow: Cys-213 and Cys-214.

The protein belongs to the small GTPase superfamily. Rab family.

The protein resides in the cell membrane. Its function is as follows. Involved in auxin-mediated response. May be involved in vesicle trafficking of components involved in polar auxin transport. Binds GTP and GDP and possesses intrinsic GTPase activity. This Arabidopsis thaliana (Mouse-ear cress) protein is Ras-related protein RABA1a (RABA1A).